The following is a 489-amino-acid chain: Coronin-1B (489 aa).

At Ser2 the chain carries Phosphoserine. WD repeat units follow at residues 80–120 (GHTG…LTSP), 130–170 (GHTK…ELYR), 174–213 (LHPD…LVAE), 217–260 (AHEG…EPMA), and 265–305 (DSSN…PYIH). The segment at 414-443 (DSRPAMAPGSSRLGAPASTTAAADATPSGS) is disordered. Over residues 427-443 (GAPASTTAAADATPSGS) the composition is skewed to low complexity. The stretch at 449–474 (EAGKLEEVMQELRALRALVKEQGERI) forms a coiled coil.

Belongs to the WD repeat coronin family. In terms of assembly, forms homooligomers, but does not form complexes with the other coronins. Interacts with Arp2/3 complex components, including ACTR2, ARPC1B and ARPC2. Binds actin. Phosphorylation on Ser-2 regulates the interaction with the Arp2/3 complex and cell motility in fibroblasts. Phosphorylation does not seem to affect subcellular location.

Its subcellular location is the cytoplasm. It is found in the cytoskeleton. It localises to the stress fiber. Regulates leading edge dynamics and cell motility in fibroblasts. May be involved in cytokinesis and signal transduction. This Pongo abelii (Sumatran orangutan) protein is Coronin-1B (CORO1B).